Reading from the N-terminus, the 348-residue chain is MSLRDKLNELHERGLAEIQKSTDLKDVNQVRVSLLGKKGPITEVLRGMRDLDAEERPKVGAFANEIRDDLTAALTKRREELENAVLNARLAKEAIDVTLPGTPVAKGEPHVIQQIIDQIEDLFLGMGYQVLSGPEVEEDKYNFEMMNLPKNHPARDMQDTFYITKEILMRTQTSPMQARTLEKHDFSQGPLKMISPGVVYRRDTDDPTHSHQFHQVEGLVIDKHITMADLKGTLQVLAHELFGDKFDVRLRPSYFPFTEPSVETDITCFNCGGKGCNVCKNTGWIEVLGAGMVHPNVLKMAGVDPDVYGGFAFGVGPDRFAMLKYGVDDIRNFYLNDVRFLTQFTKKG.

Glutamate 259 is a Mg(2+) binding site.

This sequence belongs to the class-II aminoacyl-tRNA synthetase family. Phe-tRNA synthetase alpha subunit type 1 subfamily. Tetramer of two alpha and two beta subunits. It depends on Mg(2+) as a cofactor.

It is found in the cytoplasm. It carries out the reaction tRNA(Phe) + L-phenylalanine + ATP = L-phenylalanyl-tRNA(Phe) + AMP + diphosphate + H(+). In Levilactobacillus brevis (strain ATCC 367 / BCRC 12310 / CIP 105137 / JCM 1170 / LMG 11437 / NCIMB 947 / NCTC 947) (Lactobacillus brevis), this protein is Phenylalanine--tRNA ligase alpha subunit.